The chain runs to 731 residues: Inducible ornithine decarboxylase (731 aa).

Position 356 is an N6-(pyridoxal phosphate)lysine (Lys356).

Belongs to the Orn/Lys/Arg decarboxylase class-I family. Dodecamer. The cofactor is pyridoxal 5'-phosphate.

It carries out the reaction L-ornithine + H(+) = putrescine + CO2. This is Inducible ornithine decarboxylase (odcI) from Lactobacillus sp. (strain 30a).